The primary structure comprises 769 residues: Probable beta-glucosidase M (769 aa).

The signal sequence occupies residues 1 to 22; it reads MHSNVGLAGLAGLLATASVCLS. N-linked (GlcNAc...) asparagine glycans are attached at residues Asn-28, Asn-75, and Asn-262. The active site involves Asp-290. Asn-318, Asn-325, Asn-396, Asn-437, Asn-510, Asn-546, and Asn-625 each carry an N-linked (GlcNAc...) asparagine glycan.

It belongs to the glycosyl hydrolase 3 family.

It localises to the secreted. The catalysed reaction is Hydrolysis of terminal, non-reducing beta-D-glucosyl residues with release of beta-D-glucose.. The protein operates within glycan metabolism; cellulose degradation. Functionally, beta-glucosidases are one of a number of cellulolytic enzymes involved in the degradation of cellulosic biomass. Catalyzes the last step releasing glucose from the inhibitory cellobiose. This chain is Probable beta-glucosidase M (bglM), found in Aspergillus fumigatus (strain CBS 144.89 / FGSC A1163 / CEA10) (Neosartorya fumigata).